Here is a 189-residue protein sequence, read N- to C-terminus: MAQLYYKYGTMNSGKTIEILKVAHNYEEQGKPVVIMTSALDTRDGFGIVSSRIGMRREAIPISNDMDIFTFIAQLEEKPYCVLIDESQFLSKQNVYDLARVVDELNVPVMAFGLKNDFQNNLFEGSKHLLLLADKIDEIKTICQYCSKKATMVLRTENGKPVYEGDQIQIGGNETYIPVCRKHYFNPDI.

ATP-binding positions include 9–16 (GTMNSGKT) and 85–88 (DESQ). Glutamate 86 (proton acceptor) is an active-site residue. Residues cysteine 143, cysteine 146, cysteine 180, and histidine 183 each contribute to the Zn(2+) site.

The protein belongs to the thymidine kinase family. In terms of assembly, homotetramer.

It localises to the cytoplasm. The catalysed reaction is thymidine + ATP = dTMP + ADP + H(+). This chain is Thymidine kinase, found in Streptococcus pyogenes serotype M1.